The sequence spans 273 residues: Eukaryotic translation initiation factor 3 subunit G-2 (273 aa).

An RRM domain is found at 193-271; it reads SAVRISNLSE…LILCVEWSKP (79 aa).

Belongs to the eIF-3 subunit G family. As to quaternary structure, component of the eukaryotic translation initiation factor 3 (eIF-3) complex. The eIF-3 complex interacts with pix.

The protein localises to the cytoplasm. Functionally, RNA-binding component of the eukaryotic translation initiation factor 3 (eIF-3) complex, which is involved in protein synthesis of a specialized repertoire of mRNAs and, together with other initiation factors, stimulates binding of mRNA and methionyl-tRNAi to the 40S ribosome. The eIF-3 complex specifically targets and initiates translation of a subset of mRNAs involved in cell proliferation. This subunit can bind 18S rRNA. This is Eukaryotic translation initiation factor 3 subunit G-2 from Drosophila simulans (Fruit fly).